A 418-amino-acid polypeptide reads, in one-letter code: Transmembrane protease serine 11D (418 aa).

Topologically, residues 1-20 are cytoplasmic; the sequence is MYRPARVTSTSRFLNPYVVC. Residues 21 to 41 form a helical; Signal-anchor for type II membrane protein membrane-spanning segment; that stretch reads FIVVAGVVILAVTIALLVYFL. Residues 42-418 are Extracellular-facing; it reads AFDQKSYFYR…LDWIRQQTGI (377 aa). The SEA domain occupies 46 to 163; it reads KSYFYRSSFQ…STEITSLTDQ (118 aa). Residue Asn-144 is glycosylated (N-linked (GlcNAc...) asparagine). 4 cysteine pairs are disulfide-bonded: Cys-173–Cys-292, Cys-212–Cys-228, Cys-337–Cys-353, and Cys-364–Cys-393. The Peptidase S1 domain occupies 187–417; it reads ILGGTEAEEG…YLDWIRQQTG (231 aa). Residues His-227 and Asp-272 each act as charge relay system in the active site. Ser-368 acts as the Charge relay system in catalysis.

The protein belongs to the peptidase S1 family. In terms of assembly, monomer. In terms of tissue distribution, located in the cells of the submucosal serous glands of the bronchi and trachea.

It localises to the cell membrane. The protein localises to the secreted. Strongly inhibited by diisopropyl fluorophosphate, leupeptin, antipain, aprotinin, and soybean trypsin inhibitor, but hardly inhibited by secretory leukocyte protease inhibitor at 10 microM. In terms of biological role, may play some biological role in the host defense system on the mucous membrane independently of or in cooperation with other substances in airway mucous or bronchial secretions. Plays a role in the proteolytic processing of ACE2. Proteolytically cleaves and activates the human coronavirus 229E (HCoV-229E) spike glycoprotein which facilitate virus-cell membrane fusions; spike proteins are synthesized and maintained in precursor intermediate folding states and proteolysis permits the refolding and energy release required to create stable virus-cell linkages and membrane coalescence. Preferentially cleaves the C-terminal side of arginine residues at the P1 position of certain peptides, cleaving Boc-Phe-Ser-Arg-4-methylcoumaryl-7-amide most efficiently and having an optimum pH of 8.6 with this substrate. The polypeptide is Transmembrane protease serine 11D (TMPRSS11D) (Homo sapiens (Human)).